Here is a 101-residue protein sequence, read N- to C-terminus: Gene 30 protein (101 aa).

This is Gene 30 protein (30) from Mycobacterium phage L5 (Mycobacteriophage L5).